The chain runs to 430 residues: Glutamate-1-semialdehyde 2,1-aminomutase (430 aa).

Residue lysine 269 is modified to N6-(pyridoxal phosphate)lysine.

It belongs to the class-III pyridoxal-phosphate-dependent aminotransferase family. HemL subfamily. Homodimer. Requires pyridoxal 5'-phosphate as cofactor.

It is found in the cytoplasm. The enzyme catalyses (S)-4-amino-5-oxopentanoate = 5-aminolevulinate. Its pathway is porphyrin-containing compound metabolism; protoporphyrin-IX biosynthesis; 5-aminolevulinate from L-glutamyl-tRNA(Glu): step 2/2. The polypeptide is Glutamate-1-semialdehyde 2,1-aminomutase (Desulfitobacterium hafniense (strain DSM 10664 / DCB-2)).